A 143-amino-acid polypeptide reads, in one-letter code: Periplasmic nitrate reductase, electron transfer subunit (143 aa).

The first 22 residues, 1–22 (MKKILTLAAIVLAIGGCSGQQA), serve as a signal peptide directing secretion. Heme c is bound by residues His72, Cys85, Cys88, His89, His106, Cys121, Cys124, and His125.

It belongs to the NapB family. In terms of assembly, component of the periplasmic nitrate reductase NapAB complex composed of NapA and NapB. In terms of processing, binds 2 heme C groups per subunit.

The protein localises to the periplasm. Functionally, electron transfer subunit of the periplasmic nitrate reductase complex NapAB. Receives electrons from the membrane-anchored tetraheme c-type CymA protein and transfers these to NapA subunit, thus allowing electron flow between membrane and periplasm. Not essential for nitrate reduction but confers advantage to the organism when grown on nitrate and thereby a fitness gain in utilizing nitrate. This Shewanella oneidensis (strain ATCC 700550 / JCM 31522 / CIP 106686 / LMG 19005 / NCIMB 14063 / MR-1) protein is Periplasmic nitrate reductase, electron transfer subunit.